The sequence spans 358 residues: Plastoglobulin-1, chloroplastic (358 aa).

A chloroplast-targeting transit peptide spans 1–47; it reads MALLSSTLRAPLVFSKNPKPVSLSSLHSRIYLSPRSPRFPSLRFISA. Residues 48–114 form a disordered region; it reads AGDTGDAEKP…NDAGNGTPTF (67 aa).

Belongs to the PAP/fibrillin family.

Its subcellular location is the plastid. The protein resides in the chloroplast. Functionally, may form together with other plastoglobulins a coat on the surface of the lipoprotein particle. The coat may contain receptors for attachment to the thylakoid membrane as well as regulatory proteins that may function in the transfer of lipids to and from the thylakoid membranes. In Pisum sativum (Garden pea), this protein is Plastoglobulin-1, chloroplastic (PG1).